The chain runs to 213 residues: MGNRTEEDYNFVFKVVLIGESGVGKTNLLSRFTRNEFSHDSRTTIGVEFSTRTVMLGTAAIKAQIWDTAGLERYRAITSAYYRGAVGALLVFDLTKHQTYAVVERWLKELYDHAEATIVVMLVGNKSDLHQAREVPTEEARMFAENNGLLFLETSALDSTNVELAFETVLKEIFTKVSKQRQNSTRTNAIALGSAQAGQEPGAGQKRACCISL.

The GTP site is built by Ser-21, Gly-24, Lys-25, Thr-26, Asn-27, Ser-38, His-39, Thr-43, and Thr-44. Thr-26 contributes to the Mg(2+) binding site. 2 consecutive short sequence motifs (switch) follow at residues Asn-35 to Phe-49 and Asp-67 to Gly-84. Thr-44 and Asp-67 together coordinate Mg(2+). Residues Gly-70, Asn-125, Lys-126, Asp-128, Ala-156, and Leu-157 each contribute to the GTP site. S-geranylgeranyl cysteine attachment occurs at residues Cys-209 and Cys-210. Cys-210 bears the Cysteine methyl ester mark. The propeptide at Ile-211–Leu-213 is removed in mature form.

It belongs to the small GTPase superfamily. Rab family. Interacts (GTP-bound form) with RAB11FIP1, RAB11FIP2, RAB11FIP3 and RAB11FIP4. Interacts (via the hypervariable C-terminal region) with ITGB1 (via the cytoplasmic region); the interaction is GTP-dependent. Interacts with ITGAV. Associates with the integrin alpha-V/beta-1 heterodimer. Interacts with VPS33B. It depends on Mg(2+) as a cofactor.

It localises to the cell membrane. The protein resides in the cell projection. Its subcellular location is the pseudopodium membrane. The protein localises to the cytoplasmic vesicle. It carries out the reaction GTP + H2O = GDP + phosphate + H(+). Regulated by guanine nucleotide exchange factors (GEFs) which promote the exchange of bound GDP for free GTP. Regulated by GTPase activating proteins (GAPs) which increase the GTP hydrolysis activity. Inhibited by GDP dissociation inhibitors (GDIs) which prevent Rab-GDP dissociation. Functionally, the small GTPases Rab are key regulators of intracellular membrane trafficking, from the formation of transport vesicles to their fusion with membranes. Rabs cycle between an inactive GDP-bound form and an active GTP-bound form that is able to recruit to membranes different set of downstream effectors directly responsible for vesicle formation, movement, tethering and fusion. RAB25 regulates epithelial cell differentiation, proliferation and survival, thereby playing key roles in tumorigenesis. Promotes invasive migration of cells in which it functions to localize and maintain integrin alpha-V/beta-1 at the tips of extending pseudopodia. Involved in the regulation of epithelial morphogenesis through the control of CLDN4 expression and localization at tight junctions. May selectively regulate the apical recycling pathway. Together with MYO5B regulates transcytosis. This is Ras-related protein Rab-25 (RAB25) from Canis lupus familiaris (Dog).